A 457-amino-acid chain; its full sequence is D-inositol 3-phosphate glycosyltransferase (457 aa).

Residue H34 participates in 1D-myo-inositol 3-phosphate binding. Residues 40–41 (QP) and G48 contribute to the UDP-N-acetyl-alpha-D-glucosamine site. 1D-myo-inositol 3-phosphate-binding positions include 45–50 (DAGGMN), K103, Y136, T160, and R180. Residues R267, K272, and V333 each coordinate UDP-N-acetyl-alpha-D-glucosamine. Positions 342, 343, and 345 each coordinate Mg(2+). Residues E355 and E363 each coordinate UDP-N-acetyl-alpha-D-glucosamine. T369 serves as a coordination point for Mg(2+).

Belongs to the glycosyltransferase group 1 family. MshA subfamily. Homodimer.

The catalysed reaction is 1D-myo-inositol 3-phosphate + UDP-N-acetyl-alpha-D-glucosamine = 1D-myo-inositol 2-acetamido-2-deoxy-alpha-D-glucopyranoside 3-phosphate + UDP + H(+). Its function is as follows. Catalyzes the transfer of a N-acetyl-glucosamine moiety to 1D-myo-inositol 3-phosphate to produce 1D-myo-inositol 2-acetamido-2-deoxy-glucopyranoside 3-phosphate in the mycothiol biosynthesis pathway. The polypeptide is D-inositol 3-phosphate glycosyltransferase (Streptomyces coelicolor (strain ATCC BAA-471 / A3(2) / M145)).